The following is a 135-amino-acid chain: CDGSH iron-sulfur domain-containing protein 2A (135 aa).

The Lumenal segment spans residues 1-37 (MVLETISRIIKIQLPAYLKKLPLPETIGGFARLTVSE). A helical transmembrane segment spans residues 38-60 (WLRLLPLLGILALLGYLTIRPFL). Residues 61–135 (PKKKKQKDSL…GPLILKKKIL (75 aa)) lie on the Cytoplasmic side of the membrane. [2Fe-2S] cluster contacts are provided by Cys99, Cys101, Cys110, and His114.

Belongs to the CISD protein family. CISD2 subfamily. Homodimer. Requires [2Fe-2S] cluster as cofactor.

The protein resides in the endoplasmic reticulum membrane. It localises to the mitochondrion outer membrane. Its function is as follows. Regulator of autophagy that contributes to antagonize becn1-mediated cellular autophagy at the endoplasmic reticulum. Participates in the interaction of bcl2 with becn1 and is required for bcl2-mediated depression of endoplasmic reticulum Ca(2+) stores during autophagy. This is CDGSH iron-sulfur domain-containing protein 2A (cisd2a) from Salmo salar (Atlantic salmon).